The primary structure comprises 124 residues: Ribonuclease P protein component (124 aa).

Belongs to the RnpA family. Consists of a catalytic RNA component (M1 or rnpB) and a protein subunit.

The enzyme catalyses Endonucleolytic cleavage of RNA, removing 5'-extranucleotides from tRNA precursor.. In terms of biological role, RNaseP catalyzes the removal of the 5'-leader sequence from pre-tRNA to produce the mature 5'-terminus. It can also cleave other RNA substrates such as 4.5S RNA. The protein component plays an auxiliary but essential role in vivo by binding to the 5'-leader sequence and broadening the substrate specificity of the ribozyme. The polypeptide is Ribonuclease P protein component (Maridesulfovibrio salexigens (strain ATCC 14822 / DSM 2638 / NCIMB 8403 / VKM B-1763) (Desulfovibrio salexigens)).